We begin with the raw amino-acid sequence, 208 residues long: Probable nicotinate-nucleotide adenylyltransferase (208 aa).

This sequence belongs to the NadD family.

It catalyses the reaction nicotinate beta-D-ribonucleotide + ATP + H(+) = deamido-NAD(+) + diphosphate. The protein operates within cofactor biosynthesis; NAD(+) biosynthesis; deamido-NAD(+) from nicotinate D-ribonucleotide: step 1/1. In terms of biological role, catalyzes the reversible adenylation of nicotinate mononucleotide (NaMN) to nicotinic acid adenine dinucleotide (NaAD). This chain is Probable nicotinate-nucleotide adenylyltransferase, found in Kineococcus radiotolerans (strain ATCC BAA-149 / DSM 14245 / SRS30216).